The chain runs to 345 residues: Biotin synthase (345 aa).

The 219-residue stretch at 38–256 folds into the Radical SAM core domain; it reads RQVQVSTLLS…IAVARIMMPA (219 aa). The [4Fe-4S] cluster site is built by Cys53, Cys57, and Cys60. [2Fe-2S] cluster is bound by residues Cys97, Cys128, Cys188, and Arg260.

It belongs to the radical SAM superfamily. Biotin synthase family. Homodimer. Requires [4Fe-4S] cluster as cofactor. [2Fe-2S] cluster is required as a cofactor.

The catalysed reaction is (4R,5S)-dethiobiotin + (sulfur carrier)-SH + 2 reduced [2Fe-2S]-[ferredoxin] + 2 S-adenosyl-L-methionine = (sulfur carrier)-H + biotin + 2 5'-deoxyadenosine + 2 L-methionine + 2 oxidized [2Fe-2S]-[ferredoxin]. Its pathway is cofactor biosynthesis; biotin biosynthesis; biotin from 7,8-diaminononanoate: step 2/2. Functionally, catalyzes the conversion of dethiobiotin (DTB) to biotin by the insertion of a sulfur atom into dethiobiotin via a radical-based mechanism. This chain is Biotin synthase, found in Serratia proteamaculans (strain 568).